Here is a 147-residue protein sequence, read N- to C-terminus: Putative pre-16S rRNA nuclease (147 aa).

Belongs to the YqgF nuclease family.

Its subcellular location is the cytoplasm. Its function is as follows. Could be a nuclease involved in processing of the 5'-end of pre-16S rRNA. This chain is Putative pre-16S rRNA nuclease, found in Latilactobacillus sakei subsp. sakei (strain 23K) (Lactobacillus sakei subsp. sakei).